A 474-amino-acid polypeptide reads, in one-letter code: Phenylalanine--tRNA ligase alpha subunit (474 aa).

L-phenylalanine contacts are provided by residues Thr-317, 356-358 (QLE), and Tyr-396. Glu-398 is a binding site for Mg(2+). Phe-421 provides a ligand contact to L-phenylalanine.

This sequence belongs to the class-II aminoacyl-tRNA synthetase family. Phe-tRNA synthetase alpha subunit type 2 subfamily. Tetramer of two alpha and two beta subunits. Requires Mg(2+) as cofactor.

It is found in the cytoplasm. The catalysed reaction is tRNA(Phe) + L-phenylalanine + ATP = L-phenylalanyl-tRNA(Phe) + AMP + diphosphate + H(+). This chain is Phenylalanine--tRNA ligase alpha subunit, found in Methanocorpusculum labreanum (strain ATCC 43576 / DSM 4855 / Z).